Consider the following 186-residue polypeptide: ATP synthase subunit delta (186 aa).

The protein belongs to the ATPase delta chain family. F-type ATPases have 2 components, F(1) - the catalytic core - and F(0) - the membrane proton channel. F(1) has five subunits: alpha(3), beta(3), gamma(1), delta(1), epsilon(1). F(0) has three main subunits: a(1), b(2) and c(10-14). The alpha and beta chains form an alternating ring which encloses part of the gamma chain. F(1) is attached to F(0) by a central stalk formed by the gamma and epsilon chains, while a peripheral stalk is formed by the delta and b chains.

It localises to the cell inner membrane. In terms of biological role, f(1)F(0) ATP synthase produces ATP from ADP in the presence of a proton or sodium gradient. F-type ATPases consist of two structural domains, F(1) containing the extramembraneous catalytic core and F(0) containing the membrane proton channel, linked together by a central stalk and a peripheral stalk. During catalysis, ATP synthesis in the catalytic domain of F(1) is coupled via a rotary mechanism of the central stalk subunits to proton translocation. This protein is part of the stalk that links CF(0) to CF(1). It either transmits conformational changes from CF(0) to CF(1) or is implicated in proton conduction. The protein is ATP synthase subunit delta of Brucella suis biovar 1 (strain 1330).